The primary structure comprises 269 residues: Surfeit locus protein 4 (269 aa).

5 helical membrane-spanning segments follow: residues 64 to 84 (FLATCFVLLNLIGQLGGCVLI), 92 to 112 (YACFGLFGIIALQTVAYSILW), 179 to 199 (FFSILQNLVGTALIILVAIGF), 203 to 223 (LAALTLVLWLLVINVYFNAFW), and 242 to 262 (TTSVIGGLLLVVALGPGGVSM). The Di-lysine motif signature appears at 266–269 (KKEW).

Belongs to the SURF4 family.

The protein resides in the endoplasmic reticulum membrane. The protein localises to the endoplasmic reticulum-Golgi intermediate compartment membrane. It localises to the golgi apparatus membrane. Functionally, endoplasmic reticulum cargo receptor that mediates the export of lipoproteins by recruiting cargos into COPII vesicles to facilitate their secretion. Acts as a cargo receptor for lipoproteins bearing both APOB and APOA1, thereby regulating lipoprotein delivery and the maintenance of lipid homeostasis. The polypeptide is Surfeit locus protein 4 (Takifugu rubripes (Japanese pufferfish)).